The chain runs to 688 residues: Polyribonucleotide nucleotidyltransferase (688 aa).

Positions 484 and 490 each coordinate Mg(2+). In terms of domain architecture, KH spans 550–609 (PQTEIFNVAPDKIIEIIGQGGRVIKEIVEKFEVKIDLNTPSGEVKIMGNKERVLKTKEFI). The region spanning 626-688 (DEVLEAQVKR…NKGKIALDLA (63 aa)) is the S1 motif domain.

It belongs to the polyribonucleotide nucleotidyltransferase family. Mg(2+) serves as cofactor.

The protein localises to the cytoplasm. It catalyses the reaction RNA(n+1) + phosphate = RNA(n) + a ribonucleoside 5'-diphosphate. Its function is as follows. Involved in mRNA degradation. Catalyzes the phosphorolysis of single-stranded polyribonucleotides processively in the 3'- to 5'-direction. In Helicobacter pylori (strain J99 / ATCC 700824) (Campylobacter pylori J99), this protein is Polyribonucleotide nucleotidyltransferase.